The sequence spans 290 residues: 4-hydroxy-tetrahydrodipicolinate synthase (290 aa).

T45 lines the pyruvate pocket. Y133 functions as the Proton donor/acceptor in the catalytic mechanism. K161 (schiff-base intermediate with substrate) is an active-site residue. I202 provides a ligand contact to pyruvate.

This sequence belongs to the DapA family. Homotetramer; dimer of dimers.

Its subcellular location is the cytoplasm. The catalysed reaction is L-aspartate 4-semialdehyde + pyruvate = (2S,4S)-4-hydroxy-2,3,4,5-tetrahydrodipicolinate + H2O + H(+). It functions in the pathway amino-acid biosynthesis; L-lysine biosynthesis via DAP pathway; (S)-tetrahydrodipicolinate from L-aspartate: step 3/4. Catalyzes the condensation of (S)-aspartate-beta-semialdehyde [(S)-ASA] and pyruvate to 4-hydroxy-tetrahydrodipicolinate (HTPA). The protein is 4-hydroxy-tetrahydrodipicolinate synthase of Alkalilimnicola ehrlichii (strain ATCC BAA-1101 / DSM 17681 / MLHE-1).